Reading from the N-terminus, the 257-residue chain is Hydroxyacylglutathione hydrolase (257 aa).

Zn(2+)-binding residues include His54, His56, Asp58, His59, His113, Asp137, and His175.

It belongs to the metallo-beta-lactamase superfamily. Glyoxalase II family. As to quaternary structure, monomer. Zn(2+) serves as cofactor.

The catalysed reaction is an S-(2-hydroxyacyl)glutathione + H2O = a 2-hydroxy carboxylate + glutathione + H(+). Its pathway is secondary metabolite metabolism; methylglyoxal degradation; (R)-lactate from methylglyoxal: step 2/2. Thiolesterase that catalyzes the hydrolysis of S-D-lactoyl-glutathione to form glutathione and D-lactic acid. This is Hydroxyacylglutathione hydrolase from Nostoc sp. (strain PCC 7120 / SAG 25.82 / UTEX 2576).